A 373-amino-acid chain; its full sequence is 3-dehydroquinate synthase (373 aa).

NAD(+) contacts are provided by residues 67-72 (EGEETK), 101-105 (GVILD), 125-126 (TT), lysine 138, and lysine 147. Zn(2+)-binding residues include glutamate 180, histidine 240, and histidine 256.

This sequence belongs to the sugar phosphate cyclases superfamily. Dehydroquinate synthase family. Requires NAD(+) as cofactor. Co(2+) serves as cofactor. The cofactor is Zn(2+).

The protein resides in the cytoplasm. The catalysed reaction is 7-phospho-2-dehydro-3-deoxy-D-arabino-heptonate = 3-dehydroquinate + phosphate. It participates in metabolic intermediate biosynthesis; chorismate biosynthesis; chorismate from D-erythrose 4-phosphate and phosphoenolpyruvate: step 2/7. Its function is as follows. Catalyzes the conversion of 3-deoxy-D-arabino-heptulosonate 7-phosphate (DAHP) to dehydroquinate (DHQ). This Chlamydia trachomatis serovar L2 (strain ATCC VR-902B / DSM 19102 / 434/Bu) protein is 3-dehydroquinate synthase.